A 124-amino-acid chain; its full sequence is Large ribosomal subunit protein bL12 (124 aa).

It belongs to the bacterial ribosomal protein bL12 family. As to quaternary structure, homodimer. Part of the ribosomal stalk of the 50S ribosomal subunit. Forms a multimeric L10(L12)X complex, where L10 forms an elongated spine to which 2 to 4 L12 dimers bind in a sequential fashion. Binds GTP-bound translation factors.

In terms of biological role, forms part of the ribosomal stalk which helps the ribosome interact with GTP-bound translation factors. Is thus essential for accurate translation. The protein is Large ribosomal subunit protein bL12 of Paracoccus denitrificans (strain Pd 1222).